Reading from the N-terminus, the 239-residue chain is Ribonuclease PH (239 aa).

Phosphate is bound by residues R86 and 124 to 126 (GTR).

It belongs to the RNase PH family. In terms of assembly, homohexameric ring arranged as a trimer of dimers.

The catalysed reaction is tRNA(n+1) + phosphate = tRNA(n) + a ribonucleoside 5'-diphosphate. In terms of biological role, phosphorolytic 3'-5' exoribonuclease that plays an important role in tRNA 3'-end maturation. Removes nucleotide residues following the 3'-CCA terminus of tRNAs; can also add nucleotides to the ends of RNA molecules by using nucleoside diphosphates as substrates, but this may not be physiologically important. Probably plays a role in initiation of 16S rRNA degradation (leading to ribosome degradation) during starvation. This chain is Ribonuclease PH, found in Rickettsia felis (strain ATCC VR-1525 / URRWXCal2) (Rickettsia azadi).